A 275-amino-acid polypeptide reads, in one-letter code: Large ribosomal subunit protein uL2 (275 aa).

Residues 221-275 (RGTAMNPVDHPHGGGEGRTGEGRVPVNPWGQPTKGYRTRSNKRTNSMIVQRRHKR) form a disordered region. Residues 229 to 241 (DHPHGGGEGRTGE) show a composition bias toward basic and acidic residues.

Belongs to the universal ribosomal protein uL2 family. Part of the 50S ribosomal subunit. Forms a bridge to the 30S subunit in the 70S ribosome.

Functionally, one of the primary rRNA binding proteins. Required for association of the 30S and 50S subunits to form the 70S ribosome, for tRNA binding and peptide bond formation. It has been suggested to have peptidyltransferase activity; this is somewhat controversial. Makes several contacts with the 16S rRNA in the 70S ribosome. This is Large ribosomal subunit protein uL2 from Dechloromonas aromatica (strain RCB).